Here is a 517-residue protein sequence, read N- to C-terminus: Maturase K (517 aa).

It belongs to the intron maturase 2 family. MatK subfamily.

The protein localises to the plastid. Its subcellular location is the chloroplast. In terms of biological role, usually encoded in the trnK tRNA gene intron. Probably assists in splicing its own and other chloroplast group II introns. The chain is Maturase K from Caryota mitis (Burmese fishtail palm).